The chain runs to 205 residues: Large ribosomal subunit protein uL18 (205 aa).

This sequence belongs to the universal ribosomal protein uL18 family. As to quaternary structure, part of the 50S ribosomal subunit. Contacts the 5S and 23S rRNAs.

In terms of biological role, this is one of the proteins that bind and probably mediate the attachment of the 5S RNA into the large ribosomal subunit, where it forms part of the central protuberance. This is Large ribosomal subunit protein uL18 from Pyrobaculum aerophilum (strain ATCC 51768 / DSM 7523 / JCM 9630 / CIP 104966 / NBRC 100827 / IM2).